The sequence spans 450 residues: Adenosylhomocysteinase (450 aa).

Substrate is bound by residues T59, D135, and E160. T161–T163 contributes to the NAD(+) binding site. Substrate contacts are provided by K190 and D194. Residues N195, G224–G229, E247, I303–H305, and N350 contribute to the NAD(+) site.

The protein belongs to the adenosylhomocysteinase family. The cofactor is NAD(+).

It is found in the cytoplasm. It catalyses the reaction S-adenosyl-L-homocysteine + H2O = L-homocysteine + adenosine. Its pathway is amino-acid biosynthesis; L-homocysteine biosynthesis; L-homocysteine from S-adenosyl-L-homocysteine: step 1/1. Its function is as follows. Adenosylhomocysteine is a competitive inhibitor of S-adenosyl-L-methionine-dependent methyl transferase reactions; therefore adenosylhomocysteinase may play a key role in the control of methylations via regulation of the intracellular concentration of adenosylhomocysteine. This is Adenosylhomocysteinase (SAH1) from Candida albicans (strain SC5314 / ATCC MYA-2876) (Yeast).